The following is a 379-amino-acid chain: Mannitol-1-phosphate 5-dehydrogenase (379 aa).

3-14 (AVHFGAGNIGRG) is a binding site for NAD(+).

This sequence belongs to the mannitol dehydrogenase family.

It catalyses the reaction D-mannitol 1-phosphate + NAD(+) = beta-D-fructose 6-phosphate + NADH + H(+). The protein is Mannitol-1-phosphate 5-dehydrogenase of Anoxybacillus flavithermus (strain DSM 21510 / WK1).